We begin with the raw amino-acid sequence, 122 residues long: Large ribosomal subunit protein uL29 (122 aa).

S12 is modified (phosphoserine).

Belongs to the universal ribosomal protein uL29 family. As to quaternary structure, component of the large ribosomal subunit (LSU). Mature yeast ribosomes consist of a small (40S) and a large (60S) subunit. The 40S small subunit contains 1 molecule of ribosomal RNA (18S rRNA) and at least 33 different proteins. The large 60S subunit contains 3 rRNA molecules (25S, 5.8S and 5S rRNA) and at least 46 different proteins. uL29 is associated with the polypeptide exit tunnel.

It is found in the cytoplasm. Its subcellular location is the nucleus. The protein resides in the nucleolus. Functionally, component of the ribosome, a large ribonucleoprotein complex responsible for the synthesis of proteins in the cell. The small ribosomal subunit (SSU) binds messenger RNAs (mRNAs) and translates the encoded message by selecting cognate aminoacyl-transfer RNA (tRNA) molecules. The large subunit (LSU) contains the ribosomal catalytic site termed the peptidyl transferase center (PTC), which catalyzes the formation of peptide bonds, thereby polymerizing the amino acids delivered by tRNAs into a polypeptide chain. The nascent polypeptides leave the ribosome through a tunnel in the LSU and interact with protein factors that function in enzymatic processing, targeting, and the membrane insertion of nascent chains at the exit of the ribosomal tunnel. This is Large ribosomal subunit protein uL29 (rpl35) from Schizosaccharomyces pombe (strain 972 / ATCC 24843) (Fission yeast).